Here is a 356-residue protein sequence, read N- to C-terminus: METKQTKKEAVANLIKRIEHGEVSDEEIRGMMKIQVQKRLKWGYKPTHEQQLAQLVTFAQSLKGMEMAEEVDTLDAELYEIPLPFLHIMCGKTLKFSPGYFKDESTTLDESEVYMMDLYCERAQIKDGQSILDLGCGHGSLTLHVAQKYRGCKVTGITNSVSQKEFIMDQCKKLDLSNVEIILEDVTKFETEITYDRIFAVALIEHMKNYELFLKKVSTWIAQYGLLFVEHHCHKVFAYQYEPLDEDDWYTEYIFPSGTLVMSSSSILLYFQEDVSVVNHWTLSGKHPSLGFKQWLKRLDDNIDEVKEIFESFYGSKEKAMKFITYWRVFCIAHSQMYSTNNGEEWMLSQVLFKKK.

Positions 96, 97, 135, 159, 163, 185, 186, and 201 each coordinate S-adenosyl-L-homocysteine. Positions 96, 97, 135, 159, 163, 185, 186, and 201 each coordinate S-adenosyl-L-methionine. Position 205 (glutamate 205) interacts with (S)-tetrahydropapaverine. The active site involves cysteine 331.

It belongs to the CFA/CMAS family. As to quaternary structure, homodimer.

Its subcellular location is the cytoplasm. The enzyme catalyses (+-)-pavine + S-adenosyl-L-methionine = N-methylpavine + S-adenosyl-L-homocysteine + H(+). It carries out the reaction (S)-reticuline + S-adenosyl-L-methionine = (S)-tembetarine + S-adenosyl-L-homocysteine + H(+). It catalyses the reaction (S)-stylopine + S-adenosyl-L-methionine = (S)-cis-N-methylstylopine + S-adenosyl-L-homocysteine. The catalysed reaction is (S)-scoulerine + S-adenosyl-L-methionine = (S)-cis-N-methylscoulerine + S-adenosyl-L-homocysteine. The enzyme catalyses (S)-tetrahydropapaverine + S-adenosyl-L-methionine = (S)-N-methyltetrahydropapaverine + S-adenosyl-L-homocysteine + H(+). It carries out the reaction (S)-tetrahydropalmatine + S-adenosyl-L-methionine = (S)-cis-N-methyltetrahydropalmatine + S-adenosyl-L-homocysteine. The protein operates within alkaloid biosynthesis. In the presence of a racemic mixture of tetrahydropapaverine (THP), one molecule of (S)-THP binds in a productive mode, while one molecule of (R)-THP is bound next to it in a non-productive mode. The (R)-THP seems to inhibit the release of products from the enzyme when higher concentrations of the racemic substrate are added to the reaction. In terms of biological role, N-methyltransferase with a substrate preference for (+-)-pavine and (S)-reticuline, but also active with the protoberberines scoulerine and stylopine and, to a lesser extent, tetrahydropapaverine (THP) and tetrahydropalmatine. Is not active on (R)-reticuline, cryptopine, glaucine, codeine, canadaline, noscapine and berbamine. The chain is Pavine N-methyltransferase from Thalictrum flavum subsp. glaucum (Yellow meadow rue).